Consider the following 596-residue polypeptide: Aspartate--tRNA(Asp/Asn) ligase (596 aa).

Residue Glu-175 coordinates L-aspartate. An aspartate region spans residues 199–202 (QQYK). Residues Arg-221 and His-454 each coordinate L-aspartate. Position 221–223 (221–223 (RDE)) interacts with ATP. An ATP-binding site is contributed by Glu-488. Arg-495 contributes to the L-aspartate binding site. 540–543 (GIDR) is a binding site for ATP.

It belongs to the class-II aminoacyl-tRNA synthetase family. Type 1 subfamily. Homodimer.

It is found in the cytoplasm. The catalysed reaction is tRNA(Asx) + L-aspartate + ATP = L-aspartyl-tRNA(Asx) + AMP + diphosphate. In terms of biological role, aspartyl-tRNA synthetase with relaxed tRNA specificity since it is able to aspartylate not only its cognate tRNA(Asp) but also tRNA(Asn). Reaction proceeds in two steps: L-aspartate is first activated by ATP to form Asp-AMP and then transferred to the acceptor end of tRNA(Asp/Asn). This chain is Aspartate--tRNA(Asp/Asn) ligase, found in Rhizobium johnstonii (strain DSM 114642 / LMG 32736 / 3841) (Rhizobium leguminosarum bv. viciae).